Here is a 615-residue protein sequence, read N- to C-terminus: Ankyrin repeat and LEM domain-containing protein 1 (615 aa).

ANK repeat units follow at residues 39 to 71 (DGAA…DPNA), 75 to 104 (EALT…DPAL), and 108 to 137 (DGLR…RTRT). The tract at residues 138–210 (RTRIGAETQE…DKHGSSASPP (73 aa)) is disordered. The Nuclear export signal signature appears at 271 to 280 (LNARLQALTL). Residues 283 to 294 (PNAAGFQSSPSS) show a composition bias toward polar residues. A disordered region spans residues 283 to 315 (PNAAGFQSSPSSMPLLDRSPAHSPPRTPTPGAS). The 45-residue stretch at 355–399 (HLPVSTVSDLELLKGLRALGENPHPITPFTRQLYHQQLEEAQIAP) folds into the LEM domain. The GIY-YIG domain occupies 448 to 566 (KSSFTYLLLD…ALGIQTLTNQ (119 aa)). A Nuclear localization signal motif is present at residues 579–586 (PPARRRRL).

As to quaternary structure, interacts (via LEM domain) with BANF1; the interaction may favor BANF1 dimerization. In terms of tissue distribution, expression is predominant in adult bone marrow.

The protein resides in the cytoplasm. Its subcellular location is the nucleus. Its function is as follows. Endonuclease that probably plays a role in the DNA damage response and DNA repair. This chain is Ankyrin repeat and LEM domain-containing protein 1 (ANKLE1), found in Homo sapiens (Human).